A 157-amino-acid chain; its full sequence is Small ribosomal subunit protein uS7 (157 aa).

It belongs to the universal ribosomal protein uS7 family. As to quaternary structure, part of the 30S ribosomal subunit. Contacts proteins S9 and S11.

One of the primary rRNA binding proteins, it binds directly to 16S rRNA where it nucleates assembly of the head domain of the 30S subunit. Is located at the subunit interface close to the decoding center, probably blocks exit of the E-site tRNA. The chain is Small ribosomal subunit protein uS7 from Acidovorax ebreus (strain TPSY) (Diaphorobacter sp. (strain TPSY)).